Reading from the N-terminus, the 183-residue chain is Peptidyl-tRNA hydrolase (183 aa).

Tyrosine 14 serves as a coordination point for tRNA. Residue histidine 19 is the Proton acceptor of the active site. TRNA contacts are provided by tyrosine 55 and asparagine 57.

It belongs to the PTH family. In terms of assembly, monomer.

It is found in the cytoplasm. It carries out the reaction an N-acyl-L-alpha-aminoacyl-tRNA + H2O = an N-acyl-L-amino acid + a tRNA + H(+). Hydrolyzes ribosome-free peptidyl-tRNAs (with 1 or more amino acids incorporated), which drop off the ribosome during protein synthesis, or as a result of ribosome stalling. In terms of biological role, catalyzes the release of premature peptidyl moieties from peptidyl-tRNA molecules trapped in stalled 50S ribosomal subunits, and thus maintains levels of free tRNAs and 50S ribosomes. This Thermus thermophilus (strain ATCC BAA-163 / DSM 7039 / HB27) protein is Peptidyl-tRNA hydrolase.